A 160-amino-acid chain; its full sequence is MGIEGVLKKGFITTSADTVLNYMRTGSLWPVTFGLACCAVEMMHAGMARYDLDRFGIIFRPSPRQADLMIVAGTLTNKMASALRRVYDQLAEPRWVLSMGSCANGGGYYHYSYSVVRGADRVVPVDVYVPGCPPTAEALIYGLIQLQQKIKRTSTIARDE.

4 residues coordinate [4Fe-4S] cluster: C37, C38, C102, and C132.

It belongs to the complex I 20 kDa subunit family. In terms of assembly, NDH-1 is composed of 14 different subunits. Subunits NuoB, C, D, E, F, and G constitute the peripheral sector of the complex. It depends on [4Fe-4S] cluster as a cofactor.

The protein localises to the cell inner membrane. The enzyme catalyses a quinone + NADH + 5 H(+)(in) = a quinol + NAD(+) + 4 H(+)(out). In terms of biological role, NDH-1 shuttles electrons from NADH, via FMN and iron-sulfur (Fe-S) centers, to quinones in the respiratory chain. Couples the redox reaction to proton translocation (for every two electrons transferred, four hydrogen ions are translocated across the cytoplasmic membrane), and thus conserves the redox energy in a proton gradient. This chain is NADH-quinone oxidoreductase subunit B, found in Neisseria meningitidis serogroup A / serotype 4A (strain DSM 15465 / Z2491).